The sequence spans 369 residues: MSRLVYVIFLLVVVEGSRNTLERNTETNATEAKVEGKGTIKLPPNVTIPGIITFGDSIVDSGNNNHLRTALKCNFPPYGKDFPGKIATGRFSDGRVPSDIVAERLGIAETIPAYLNPKLKNEDLLKGVNFASGGSGYDPLTAKLVKVVSLSDQLKNFQEYKNKLKVIVGEEKANFLVKNSLYLVVASSNDIAHTYTARSIKYNKTSYADYLADSASKFVSALYGLGARRIGVFSAVPVGCVPAARTLRGKLKRRCSEKLNEVARNFNAKISPTLEALGKELPDSRVVLIDVCDTLNDMIENPKNYGFEVSNRGCCGTGLVEVLFLCNKINPFTCKNSSSYIFWDSYHPTEKAYQIIVDKLLGNYITKLV.

The first 16 residues, 1-16, serve as a signal peptide directing secretion; sequence MSRLVYVIFLLVVVEG. Residues Asn28 and Asn45 are each glycosylated (N-linked (GlcNAc...) asparagine). Ser57 acts as the Nucleophile in catalysis. N-linked (GlcNAc...) asparagine glycosylation is found at Asn203 and Asn336. Residues Asp344 and His347 contribute to the active site.

Belongs to the 'GDSL' lipolytic enzyme family.

The protein localises to the secreted. This Arabidopsis thaliana (Mouse-ear cress) protein is GDSL esterase/lipase At5g42170.